Here is a 185-residue protein sequence, read N- to C-terminus: Uroplakin-2 (185 aa).

A signal peptide spans 1-26; that stretch reads MASPWPVWTLSWILILLAVLVPGAAA. Residues 27–85 constitute a propeptide that is removed on maturation; sequence DFNISSLSGLLSPVMTESLLVALPPCHLTGGNATLTVRRANDSKVVRSSFVVPPCRGRR. 3 N-linked (GlcNAc...) asparagine glycosylation sites follow: asparagine 29, asparagine 58, and asparagine 67. Topologically, residues 86–156 are lumenal; that stretch reads ELVSVVDSGS…IGLAMARTGG (71 aa). Residues 157–177 form a helical membrane-spanning segment; that stretch reads MVVITVLLSVAMFLLVLGLII. The Cytoplasmic segment spans residues 178–185; that stretch reads ALALGARK.

The protein belongs to the uroplakin-2 family. As to quaternary structure, interacts with uroplakin-1a (UPK1A). As to expression, bladder epithelium.

Its subcellular location is the cell membrane. Component of the asymmetric unit membrane (AUM); a highly specialized biomembrane elaborated by terminally differentiated urothelial cells. May play an important role in regulating the assembly of the AUM. The chain is Uroplakin-2 (UPK2) from Bos taurus (Bovine).